The sequence spans 232 residues: Dephospho-CoA kinase (232 aa).

One can recognise a DPCK domain in the interval 3 to 206; sequence IVGLTGGIAS…RPLTWIEFWR (204 aa). 8–15 contacts ATP; that stretch reads GGIASGKS.

This sequence belongs to the CoaE family.

Its subcellular location is the peroxisome. It carries out the reaction 3'-dephospho-CoA + ATP = ADP + CoA + H(+). The protein operates within cofactor biosynthesis; coenzyme A biosynthesis; CoA from (R)-pantothenate: step 5/5. Its function is as follows. Catalyzes the phosphorylation of the 3'-hydroxyl group of dephosphocoenzyme A to form coenzyme A. The polypeptide is Dephospho-CoA kinase (Arabidopsis thaliana (Mouse-ear cress)).